A 357-amino-acid chain; its full sequence is GTPase Obg (357 aa).

The Obg domain occupies 1-159 (MKFVDEAFID…RNLKLELKVL (159 aa)). The OBG-type G domain occupies 160–334 (ADVGLLGMPN…LIQAIYQHVR (175 aa)). Residues 166-173 (GMPNAGKS), 191-195 (FTTLH), 213-216 (DIPG), 284-287 (NKLD), and 315-317 (SAL) contribute to the GTP site. Residues Ser173 and Thr193 each coordinate Mg(2+).

The protein belongs to the TRAFAC class OBG-HflX-like GTPase superfamily. OBG GTPase family. As to quaternary structure, monomer. It depends on Mg(2+) as a cofactor.

It is found in the cytoplasm. Functionally, an essential GTPase which binds GTP, GDP and possibly (p)ppGpp with moderate affinity, with high nucleotide exchange rates and a fairly low GTP hydrolysis rate. Plays a role in control of the cell cycle, stress response, ribosome biogenesis and in those bacteria that undergo differentiation, in morphogenesis control. In Paracidovorax citrulli (strain AAC00-1) (Acidovorax citrulli), this protein is GTPase Obg.